The following is a 293-amino-acid chain: Acetyl-coenzyme A carboxylase carboxyl transferase subunit beta (293 aa).

Positions 29-293 constitute a CoA carboxyltransferase N-terminal domain; the sequence is LWVKCSECSQ…GVNELVEANI (265 aa). 4 residues coordinate Zn(2+): cysteine 33, cysteine 36, cysteine 52, and cysteine 55. The C4-type zinc-finger motif lies at 33 to 55; that stretch reads CSECSQVAYRKDLISNFNVCSNC.

This sequence belongs to the AccD/PCCB family. In terms of assembly, acetyl-CoA carboxylase is a heterohexamer composed of biotin carboxyl carrier protein (AccB), biotin carboxylase (AccC) and two subunits each of ACCase subunit alpha (AccA) and ACCase subunit beta (AccD). Zn(2+) is required as a cofactor.

It localises to the cytoplasm. The enzyme catalyses N(6)-carboxybiotinyl-L-lysyl-[protein] + acetyl-CoA = N(6)-biotinyl-L-lysyl-[protein] + malonyl-CoA. It participates in lipid metabolism; malonyl-CoA biosynthesis; malonyl-CoA from acetyl-CoA: step 1/1. In terms of biological role, component of the acetyl coenzyme A carboxylase (ACC) complex. Biotin carboxylase (BC) catalyzes the carboxylation of biotin on its carrier protein (BCCP) and then the CO(2) group is transferred by the transcarboxylase to acetyl-CoA to form malonyl-CoA. The chain is Acetyl-coenzyme A carboxylase carboxyl transferase subunit beta from Prochlorococcus marinus (strain MIT 9215).